Reading from the N-terminus, the 143-residue chain is Peptide methionine sulfoxide reductase MsrB (143 aa).

The MsrB domain occupies 16–139 (DAELRRRLTP…NSAALNFEAK (124 aa)). Cys-55, Cys-58, Cys-104, and Cys-107 together coordinate Zn(2+). Cys-128 functions as the Nucleophile in the catalytic mechanism.

The protein belongs to the MsrB Met sulfoxide reductase family. Zn(2+) serves as cofactor.

The enzyme catalyses L-methionyl-[protein] + [thioredoxin]-disulfide + H2O = L-methionyl-(R)-S-oxide-[protein] + [thioredoxin]-dithiol. This Burkholderia mallei (strain NCTC 10229) protein is Peptide methionine sulfoxide reductase MsrB.